Consider the following 312-residue polypeptide: HPr kinase/phosphorylase (312 aa).

Catalysis depends on residues His139 and Lys160. 154-161 (GDSGIGKS) contributes to the ATP binding site. Ser161 is a Mg(2+) binding site. Asp178 (proton acceptor; for phosphorylation activity. Proton donor; for dephosphorylation activity) is an active-site residue. The important for the catalytic mechanism of both phosphorylation and dephosphorylation stretch occupies residues 202–211 (IEIRGVGIID). Glu203 lines the Mg(2+) pocket. Arg244 is a catalytic residue. The important for the catalytic mechanism of dephosphorylation stretch occupies residues 265-270 (PVKTGR).

This sequence belongs to the HPrK/P family. Homohexamer. Requires Mg(2+) as cofactor.

The enzyme catalyses [HPr protein]-L-serine + ATP = [HPr protein]-O-phospho-L-serine + ADP + H(+). It carries out the reaction [HPr protein]-O-phospho-L-serine + phosphate + H(+) = [HPr protein]-L-serine + diphosphate. Functionally, catalyzes the ATP- as well as the pyrophosphate-dependent phosphorylation of a specific serine residue in HPr, a phosphocarrier protein of the phosphoenolpyruvate-dependent sugar phosphotransferase system (PTS). HprK/P also catalyzes the pyrophosphate-producing, inorganic phosphate-dependent dephosphorylation (phosphorolysis) of seryl-phosphorylated HPr (P-Ser-HPr). The two antagonistic activities of HprK/P are regulated by several intracellular metabolites, which change their concentration in response to the absence or presence of rapidly metabolisable carbon sources (glucose, fructose, etc.) in the growth medium. Therefore, by controlling the phosphorylation state of HPr, HPrK/P is a sensor enzyme that plays a major role in the regulation of carbon metabolism and sugar transport: it mediates carbon catabolite repression (CCR), and regulates PTS-catalyzed carbohydrate uptake and inducer exclusion. The protein is HPr kinase/phosphorylase of Streptococcus pneumoniae serotype 4 (strain ATCC BAA-334 / TIGR4).